We begin with the raw amino-acid sequence, 176 residues long: Putative phosphohydrolase YueE (176 aa).

In terms of domain architecture, HD spans 23–139 (GVAHAIACAY…VKKADELDEE (117 aa)).

The chain is Putative phosphohydrolase YueE (yueE) from Bacillus subtilis (strain 168).